Consider the following 326-residue polypeptide: Virulence factor CaO19.6688 (326 aa).

5 disordered regions span residues 19 to 91, 112 to 137, 161 to 184, 222 to 245, and 276 to 326; these read FNSL…KLPS, EEDN…GTTK, NTTI…PSFP, NVGQ…NDLL, and YEYG…PKIK. 3 stretches are compositionally biased toward low complexity: residues 21–42, 53–78, and 117–137; these read SLKS…SSSS, NRNT…NTTP, and EQQL…GTTK.

In terms of biological role, virulence factor involved in pathogen-host interaction. Modulates host pro-inflammatory cytokine interleukin-1 beta (IL1B) expression. This is Virulence factor CaO19.6688 from Candida albicans (strain SC5314 / ATCC MYA-2876) (Yeast).